Here is a 557-residue protein sequence, read N- to C-terminus: Formate--tetrahydrofolate ligase (557 aa).

Residue 44–51 participates in ATP binding; it reads TPLGEGKS.

Belongs to the formate--tetrahydrofolate ligase family.

It catalyses the reaction (6S)-5,6,7,8-tetrahydrofolate + formate + ATP = (6R)-10-formyltetrahydrofolate + ADP + phosphate. Its pathway is one-carbon metabolism; tetrahydrofolate interconversion. The sequence is that of Formate--tetrahydrofolate ligase from Desulfotalea psychrophila (strain LSv54 / DSM 12343).